A 298-amino-acid polypeptide reads, in one-letter code: UPF0282 protein Kcr_0286 (298 aa).

The protein belongs to the UPF0282 family.

This is UPF0282 protein Kcr_0286 from Korarchaeum cryptofilum (strain OPF8).